The primary structure comprises 412 residues: 1-deoxy-D-xylulose 5-phosphate reductoisomerase (412 aa).

Positions 10, 11, 12, 13, 36, 37, 38, and 130 each coordinate NADPH. Lys131 is a binding site for 1-deoxy-D-xylulose 5-phosphate. Glu132 serves as a coordination point for NADPH. Residue Asp156 coordinates Mn(2+). 1-deoxy-D-xylulose 5-phosphate-binding residues include Ser157, Glu158, Ser194, and His217. Glu158 is a Mn(2+) binding site. Gly223 contributes to the NADPH binding site. 1-deoxy-D-xylulose 5-phosphate is bound by residues Ser230, Asn235, Lys236, and Glu239. Glu239 is a binding site for Mn(2+).

This sequence belongs to the DXR family. It depends on Mg(2+) as a cofactor. Requires Mn(2+) as cofactor.

It catalyses the reaction 2-C-methyl-D-erythritol 4-phosphate + NADP(+) = 1-deoxy-D-xylulose 5-phosphate + NADPH + H(+). The protein operates within isoprenoid biosynthesis; isopentenyl diphosphate biosynthesis via DXP pathway; isopentenyl diphosphate from 1-deoxy-D-xylulose 5-phosphate: step 1/6. Its function is as follows. Catalyzes the NADPH-dependent rearrangement and reduction of 1-deoxy-D-xylulose-5-phosphate (DXP) to 2-C-methyl-D-erythritol 4-phosphate (MEP). This chain is 1-deoxy-D-xylulose 5-phosphate reductoisomerase, found in Prochlorococcus marinus (strain NATL2A).